A 513-amino-acid chain; its full sequence is RNA-splicing ligase RtcB homolog (513 aa).

Asp127, Cys130, His235, His267, and His361 together coordinate Mn(2+). GMP is bound at residue 234–238 (NHYAE). GMP is bound by residues 361–362 (HN), 410–413 (GGTM), Ser417, 436–439 (HGAG), and Lys512. Catalysis depends on His436, which acts as the GMP-histidine intermediate.

Belongs to the RtcB family. As to quaternary structure, catalytic component of the tRNA-splicing ligase complex. The cofactor is Mn(2+).

The enzyme catalyses a 3'-end 3'-phospho-ribonucleotide-RNA + a 5'-end dephospho-ribonucleoside-RNA + GTP = a ribonucleotidyl-ribonucleotide-RNA + GMP + diphosphate. The catalysed reaction is a 3'-end 2',3'-cyclophospho-ribonucleotide-RNA + a 5'-end dephospho-ribonucleoside-RNA + GTP + H2O = a ribonucleotidyl-ribonucleotide-RNA + GMP + diphosphate + H(+). Its function is as follows. Catalytic subunit of the tRNA-splicing ligase complex that acts by directly joining spliced tRNA halves to mature-sized tRNAs by incorporating the precursor-derived splice junction phosphate into the mature tRNA as a canonical 3',5'-phosphodiester. May act as an RNA ligase with broad substrate specificity, and may function toward other RNAs. This is RNA-splicing ligase RtcB homolog from Micromonas commoda (strain RCC299 / NOUM17 / CCMP2709) (Picoplanktonic green alga).